The chain runs to 368 residues: Phospho-N-acetylmuramoyl-pentapeptide-transferase (368 aa).

10 consecutive transmembrane segments (helical) span residues 31 to 51, 73 to 93, 98 to 118, 134 to 154, 175 to 195, 213 to 233, 249 to 269, 271 to 291, 296 to 316, and 345 to 365; these read LTSMLVTFWFGHKIIDFLYGL, TMGGLLIIGSLLISVLLWGNL, VILLSVFSLSFSVLGFADDYM, FILSILISFIFCILFFYYTGT, GPVIALGIIAIPFSILVIIGS, VLISVMTLGVIAYFSGTPIVA, VFLSALTGALFGFLWFNAHPA, VFMGDTGSLFLGATLGMIVIL, ILLLILGAIFVSEALSVILQV, and KIVIRFWIIAVILAIISLSTL.

It belongs to the glycosyltransferase 4 family. MraY subfamily. Requires Mg(2+) as cofactor.

The protein localises to the cell inner membrane. It carries out the reaction UDP-N-acetyl-alpha-D-muramoyl-L-alanyl-gamma-D-glutamyl-meso-2,6-diaminopimeloyl-D-alanyl-D-alanine + di-trans,octa-cis-undecaprenyl phosphate = di-trans,octa-cis-undecaprenyl diphospho-N-acetyl-alpha-D-muramoyl-L-alanyl-D-glutamyl-meso-2,6-diaminopimeloyl-D-alanyl-D-alanine + UMP. It functions in the pathway cell wall biogenesis; peptidoglycan biosynthesis. Catalyzes the initial step of the lipid cycle reactions in the biosynthesis of the cell wall peptidoglycan: transfers peptidoglycan precursor phospho-MurNAc-pentapeptide from UDP-MurNAc-pentapeptide onto the lipid carrier undecaprenyl phosphate, yielding undecaprenyl-pyrophosphoryl-MurNAc-pentapeptide, known as lipid I. In Leptospira interrogans serogroup Icterohaemorrhagiae serovar copenhageni (strain Fiocruz L1-130), this protein is Phospho-N-acetylmuramoyl-pentapeptide-transferase.